Here is a 153-residue protein sequence, read N- to C-terminus: SsrA-binding protein (153 aa).

The tract at residues 129–153 is disordered; the sequence is KREDMKKKDQSREMAQALREKSKSH.

Belongs to the SmpB family.

The protein resides in the cytoplasm. Functionally, required for rescue of stalled ribosomes mediated by trans-translation. Binds to transfer-messenger RNA (tmRNA), required for stable association of tmRNA with ribosomes. tmRNA and SmpB together mimic tRNA shape, replacing the anticodon stem-loop with SmpB. tmRNA is encoded by the ssrA gene; the 2 termini fold to resemble tRNA(Ala) and it encodes a 'tag peptide', a short internal open reading frame. During trans-translation Ala-aminoacylated tmRNA acts like a tRNA, entering the A-site of stalled ribosomes, displacing the stalled mRNA. The ribosome then switches to translate the ORF on the tmRNA; the nascent peptide is terminated with the 'tag peptide' encoded by the tmRNA and targeted for degradation. The ribosome is freed to recommence translation, which seems to be the essential function of trans-translation. In Geobacter sulfurreducens (strain ATCC 51573 / DSM 12127 / PCA), this protein is SsrA-binding protein.